Consider the following 206-residue polypeptide: Large ribosomal subunit protein uL13z (206 aa).

Belongs to the universal ribosomal protein uL13 family.

In Arabidopsis thaliana (Mouse-ear cress), this protein is Large ribosomal subunit protein uL13z (RPL13AA).